Here is a 187-residue protein sequence, read N- to C-terminus: Large ribosomal subunit protein eL18y (187 aa).

The disordered stretch occupies residues 151-187 (FGPAPGVPHSHSKPYVRAKGRKFEKARGKRKSRGFKV). 2 stretches are compositionally biased toward basic residues: residues 160–170 (SHSKPYVRAKG) and 177–187 (RGKRKSRGFKV).

It belongs to the eukaryotic ribosomal protein eL18 family. In terms of assembly, interacts with NIK1. Interacts directly with EXA1. In terms of tissue distribution, ubiquitous.

The protein resides in the cytoplasm. The chain is Large ribosomal subunit protein eL18y (RPL18B) from Arabidopsis thaliana (Mouse-ear cress).